A 449-amino-acid polypeptide reads, in one-letter code: UDP-N-acetylmuramate--L-alanine ligase (449 aa).

121-127 (GAHGKSS) is a binding site for ATP.

It belongs to the MurCDEF family.

It is found in the cytoplasm. It catalyses the reaction UDP-N-acetyl-alpha-D-muramate + L-alanine + ATP = UDP-N-acetyl-alpha-D-muramoyl-L-alanine + ADP + phosphate + H(+). It participates in cell wall biogenesis; peptidoglycan biosynthesis. Its function is as follows. Cell wall formation. The chain is UDP-N-acetylmuramate--L-alanine ligase from Helicobacter pylori (strain J99 / ATCC 700824) (Campylobacter pylori J99).